Here is a 367-residue protein sequence, read N- to C-terminus: Chorismate synthase (367 aa).

Arg-48 lines the NADP(+) pocket. Residues 125–127 (RSS), Gly-284, 299–303 (KPTPS), and Arg-325 each bind FMN.

It belongs to the chorismate synthase family. In terms of assembly, homotetramer. FMNH2 is required as a cofactor.

The catalysed reaction is 5-O-(1-carboxyvinyl)-3-phosphoshikimate = chorismate + phosphate. It functions in the pathway metabolic intermediate biosynthesis; chorismate biosynthesis; chorismate from D-erythrose 4-phosphate and phosphoenolpyruvate: step 7/7. In terms of biological role, catalyzes the anti-1,4-elimination of the C-3 phosphate and the C-6 proR hydrogen from 5-enolpyruvylshikimate-3-phosphate (EPSP) to yield chorismate, which is the branch point compound that serves as the starting substrate for the three terminal pathways of aromatic amino acid biosynthesis. This reaction introduces a second double bond into the aromatic ring system. This Lachnoclostridium phytofermentans (strain ATCC 700394 / DSM 18823 / ISDg) (Clostridium phytofermentans) protein is Chorismate synthase.